A 242-amino-acid chain; its full sequence is Ribonuclease PH (242 aa).

Phosphate is bound by residues R86 and 124-126 (GTR).

The protein belongs to the RNase PH family. As to quaternary structure, homohexameric ring arranged as a trimer of dimers.

It carries out the reaction tRNA(n+1) + phosphate = tRNA(n) + a ribonucleoside 5'-diphosphate. Functionally, phosphorolytic 3'-5' exoribonuclease that plays an important role in tRNA 3'-end maturation. Removes nucleotide residues following the 3'-CCA terminus of tRNAs; can also add nucleotides to the ends of RNA molecules by using nucleoside diphosphates as substrates, but this may not be physiologically important. Probably plays a role in initiation of 16S rRNA degradation (leading to ribosome degradation) during starvation. In Bacillus pumilus (strain SAFR-032), this protein is Ribonuclease PH.